A 570-amino-acid chain; its full sequence is Sulfite reductase [NADPH] hemoprotein beta-component (570 aa).

4 residues coordinate [4Fe-4S] cluster: Cys434, Cys440, Cys479, and Cys483. A siroheme-binding site is contributed by Cys483.

Belongs to the nitrite and sulfite reductase 4Fe-4S domain family. Alpha(8)-beta(8). The alpha component is a flavoprotein, the beta component is a hemoprotein. Requires siroheme as cofactor. The cofactor is [4Fe-4S] cluster.

It carries out the reaction hydrogen sulfide + 3 NADP(+) + 3 H2O = sulfite + 3 NADPH + 4 H(+). It participates in sulfur metabolism; hydrogen sulfide biosynthesis; hydrogen sulfide from sulfite (NADPH route): step 1/1. Its function is as follows. Component of the sulfite reductase complex that catalyzes the 6-electron reduction of sulfite to sulfide. This is one of several activities required for the biosynthesis of L-cysteine from sulfate. In Salmonella enteritidis PT4 (strain P125109), this protein is Sulfite reductase [NADPH] hemoprotein beta-component.